We begin with the raw amino-acid sequence, 487 residues long: Beta-barrel assembly-enhancing protease (487 aa).

The first 27 residues, 1–27 (MFRQLKKNLVATLIAALALGQVAPAFA), serve as a signal peptide directing secretion. H136 contributes to the Zn(2+) binding site. E137 is a catalytic residue. Zn(2+) is bound by residues H140 and E201. The active-site Proton donor is D205. TPR repeat units lie at residues 309-342 (HAAQ…EPNN) and 427-460 (DQEL…AKLG).

The protein belongs to the peptidase M48 family. BepA subfamily. It depends on Zn(2+) as a cofactor.

It localises to the periplasm. Functionally, functions both as a chaperone and a metalloprotease. Maintains the integrity of the outer membrane by promoting either the assembly or the elimination of outer membrane proteins, depending on their folding state. This is Beta-barrel assembly-enhancing protease from Salmonella typhi.